The primary structure comprises 1026 residues: Multidrug resistance protein MdtC (1026 aa).

Helical transmembrane passes span 15 to 35, 333 to 353, 360 to 380, 387 to 407, 431 to 451, 463 to 483, 528 to 548, 853 to 873, 897 to 917, 953 to 973, and 984 to 1004; these read ILIA…LPVA, EVEE…FLFL, LIPA…MYLC, LSLM…IVVL, VGFT…PLLL, FAVT…TLTP, LVGV…IAIP, LILI…LYES, LFNA…IGIV, PIMM…LSGG, and ITIV…TPVV.

It belongs to the resistance-nodulation-cell division (RND) (TC 2.A.6) family. MdtC subfamily. In terms of assembly, part of a tripartite efflux system composed of MdtA, MdtB and MdtC. MdtC forms a heteromultimer with MdtB.

Its subcellular location is the cell inner membrane. This chain is Multidrug resistance protein MdtC, found in Salmonella dublin (strain CT_02021853).